A 582-amino-acid chain; its full sequence is Inositol transporter 4 (582 aa).

The next 12 helical transmembrane spans lie at 35–55 (GIGGLLFGYDTGVISGALLFI), 70–90 (STIVSMAVAGAIVGAAVGGWI), 105–125 (VLFLIGAIVMAFAPAPWVIIV), 128–148 (IFVGFGVGMASMTSPLYISEA), 162–182 (GLLITGGQFFSYLINLAFVHT), 188–208 (WMLGVAGVPAIVQFVLMLSLP), 290–310 (FVGINTVMYYSPSIVQFAGYA), 317–337 (ALSLITSGLNALGSIVSMMFV), 345–365 (LMIISMFGIIACLIILATVFS), 456–476 (FGFLAIVFLGLYIVVYAPGMG), 494–514 (LGGGIAAVSNWVSNLIVSESF), and 525–545 (GTFLLFAGFSTIGLFFIWLLV).

The protein belongs to the major facilitator superfamily. Sugar transporter (TC 2.A.1.1) family. As to expression, highly expressed in pollen and phloem companion cells.

It localises to the cell membrane. Functionally, plasma membrane inositol-proton symporter. Mediates high-affinity myoinositol-proton symport across the plasma membrane. Active with myoinositol, scylloinositol and D-chiroinositol. Low activity with mucoinositol and alloinositol. This Arabidopsis thaliana (Mouse-ear cress) protein is Inositol transporter 4 (INT4).